The chain runs to 366 residues: Putative actin-9 (366 aa).

It belongs to the actin family. In terms of assembly, polymerization of globular actin (G-actin) leads to a structural filament (F-actin) in the form of a two-stranded helix. The binding of profilin to monomeric G-actin cause the sequestration of actin into profilactin complexes, and prevents the polymerization.

The protein localises to the cytoplasm. It localises to the cytoskeleton. In terms of biological role, actins are highly conserved proteins that are involved in various types of cell motility and are ubiquitously expressed in all eukaryotic cells. Essential component of cell cytoskeleton; plays an important role in cytoplasmic streaming, cell shape determination, cell division, organelle movement and extension growth. This chain is Putative actin-9 (ACT9), found in Arabidopsis thaliana (Mouse-ear cress).